Here is a 219-residue protein sequence, read N- to C-terminus: Ras-related protein Rab-3B (219 aa).

Ala2 bears the N-acetylalanine mark. Residues Ser31, Ser32, Val33, Gly34, Lys35, Thr36, Ser37, Pro49, and Ser53 each coordinate GTP. A Mg(2+)-binding site is contributed by Thr36. The Switch 1 motif lies at 45-58 (DTFTPAFVSTVGID). Mg(2+) contacts are provided by Thr54 and Asp77. Positions 78 to 96 (TAGQERYRTITTAYYRGAM) match the Switch 2 motif. Gly80 lines the GTP pocket. Thr86 carries the post-translational modification Phosphothreonine; by LRRK2. Positions 135, 136, 138, 166, and 167 each coordinate GTP. Residues Ser188 and Ser190 each carry the phosphoserine modification. Residues Cys217 and Cys219 are each lipidated (S-geranylgeranyl cysteine). Cys219 carries the cysteine methyl ester modification.

The protein belongs to the small GTPase superfamily. Rab family. As to quaternary structure, interacts with RIMS1, RIMS2, RPH3A and RPH3AL. The GTP-bound form interacts with GAS8/DRC4 (via coiled-coil domains). Interacts with GDI2, CHM and CHML; phosphorylation at Thr-86 disrupts these interactions. Interacts with MADD (via uDENN domain); the GTP-bound form is preferred for interaction. Mg(2+) is required as a cofactor. Phosphorylation of Thr-86 in the switch II region by LRRK2 prevents the association of RAB regulatory proteins, including CHM, CHML and RAB GDP dissociation inhibitor GDI2. As to expression, abundantly expressed in testis, lung and brain.

The protein resides in the cell membrane. The protein localises to the golgi apparatus. The enzyme catalyses GTP + H2O = GDP + phosphate + H(+). Its activity is regulated as follows. Regulated by guanine nucleotide exchange factors (GEFs) which promote the exchange of bound GDP for free GTP. Regulated by GTPase activating proteins (GAPs) which increase the GTP hydrolysis activity. Inhibited by GDP dissociation inhibitors (GDIs) which prevent Rab-GDP dissociation. In terms of biological role, the small GTPases Rab are key regulators of intracellular membrane trafficking, from the formation of transport vesicles to their fusion with membranes. Rabs cycle between an inactive GDP-bound form and an active GTP-bound form that is able to recruit to membranes different sets of downstream effectors directly responsible for vesicle formation, movement, tethering and fusion. This Mus musculus (Mouse) protein is Ras-related protein Rab-3B.